Reading from the N-terminus, the 408-residue chain is Diguanylate cyclase DgcN (408 aa).

Topologically, residues M1–T24 are cytoplasmic. Residues S25–L45 traverse the membrane as a helical segment. Residues K46 to N52 lie on the Periplasmic side of the membrane. Residues L53–G73 traverse the membrane as a helical segment. The Cytoplasmic segment spans residues P74–P112. A helical transmembrane segment spans residues G113–I133. Topologically, residues R134 to H154 are periplasmic. The helical transmembrane segment at F155–I175 threads the bilayer. Residues T176–R408 are Cytoplasmic-facing. The HAMP domain occupies N183–L236. Residues K278–R408 enclose the GGDEF domain. D286 contributes to the Mg(2+) binding site. The substrate site is built by N294, H299, and D303. Mg(2+) is bound at residue D329. D329 serves as the catalytic Proton acceptor.

In terms of assembly, homodimer. Interacts with the cell division proteins FtsZ and ZipA. It depends on Mg(2+) as a cofactor.

It is found in the cell inner membrane. It carries out the reaction 2 GTP = 3',3'-c-di-GMP + 2 diphosphate. The protein operates within purine metabolism; 3',5'-cyclic di-GMP biosynthesis. Inhibited by YfiR, which prevents relocation to the midcell. A reductive stress signal is required to inactivate YfiR and turn on the DGC activity of DgcN. Its function is as follows. Bifunctional protein that catalyzes the synthesis of cyclic-di-GMP (c-di-GMP) in response to reductive stress and then dynamically relocates to the division site to arrest cell division in response to envelope stress. In the presence of high intracellular c-di-GMP levels, and in response to envelope stress, interacts with cell division proteins and halts cell division, without disassembling the Z ring, but by blocking its further progress toward cytokinesis. Part of a network that regulates cell motility by altering levels of c-di-GMP. The polypeptide is Diguanylate cyclase DgcN (Escherichia coli (strain K12)).